We begin with the raw amino-acid sequence, 76 residues long: MTLTFLLVVALCMLTTCHTENYRDSQKVSPVRSIGKTQFARSLRLSERYCVPKSGLCTIFQPGKCCSGWCLIYRCT.

The signal sequence occupies residues 1 to 19 (MTLTFLLVVALCMLTTCHT). Positions 20 to 47 (ENYRDSQKVSPVRSIGKTQFARSLRLSE) are excised as a propeptide. Disulfide bonds link Cys50-Cys66, Cys57-Cys70, and Cys65-Cys75.

In terms of tissue distribution, expressed by the venom duct.

The protein resides in the secreted. This Californiconus californicus (California cone) protein is Conotoxin Cl6.4.